Reading from the N-terminus, the 194-residue chain is Lytic chitin monooxygenase (194 aa).

The N-terminal stretch at 1–28 (MKKSLLTIVLAFSFVLGGAALAPTVSEA) is a signal peptide. Cu cation contacts are provided by His29 and His114. The Chitin-binding type-4 domain maps to 29-191 (HGYVASPGSR…VNAFYQAIDV (163 aa)).

Cu(2+) is required as a cofactor.

Its subcellular location is the secreted. The catalysed reaction is [(1-&gt;4)-N-acetyl-beta-D-glucosaminyl]n+m + reduced acceptor + O2 = [(1-&gt;4)-N-acetyl-beta-D-glucosaminyl]m-1-(1-&gt;4)-2-(acetylamino)-2-deoxy-D-glucono-1,5-lactone + [(1-&gt;4)-N-acetyl-beta-D-glucosaminyl]n + acceptor + H2O.. The protein operates within glycan degradation; chitin degradation. Functionally, involved in chitin degradation. Catalyzes the oxidative cleavage of glycosidic bonds in both alpha- and beta-chitin via a copper-dependent mechanism, leading to oxidized chitooligosaccharides with a dominance of even-numbered products. Acts synergistically with the chitinase EfChi18A, and combining the two enzymes leads to rapid and complete depolymerization of crystalline chitin, especially with beta-chitin as a substrate. Is likely involved in a chitin degradation pathway that allows E.faecalis V583 to grow on chitin as a carbon source. The protein is Lytic chitin monooxygenase of Enterococcus faecalis (strain ATCC 700802 / V583).